A 363-amino-acid chain; its full sequence is Galanin receptor 2a (363 aa).

Residues 1–23 (MNASQQIHVFSSHWKVESVIISL) lie on the Extracellular side of the membrane. A helical transmembrane segment spans residues 24–44 (IFSMIFLVGTVGNCLVLAVLI). Over 45 to 54 (RNGQMNTKST) the chain is Cytoplasmic. The chain crosses the membrane as a helical span at residues 55-75 (NLFILNLGLADLCFIVFCVPL). The Extracellular portion of the chain corresponds to 76–94 (QATIYTMDEWVFGAFVCKA). Cys-92 and Cys-169 form a disulfide bridge. A helical transmembrane segment spans residues 95–115 (VHFIIYLTMYASIFTLAAVSL). Topologically, residues 116 to 135 (DRYLAIRYPLRSRETRTPRN) are cytoplasmic. Residues 136-156 (ALTSISLVWALSLFFSSPYLS) form a helical membrane-spanning segment. The Extracellular portion of the chain corresponds to 157-179 (YYQQMDLDGTTVCIPAWSVHHRQ). A helical transmembrane segment spans residues 180 to 200 (AMDICTFIFGYLIPVLILGIT). Over 201-230 (YARTIRYLWTSVDPMQDMSESRKAKRKVTK) the chain is Cytoplasmic. Residues 231–251 (MIIIVAVLFCLCWLPHHLVIL) form a helical membrane-spanning segment. The Extracellular segment spans residues 252-268 (CMWFGHFPLNHTTYVLR). A helical membrane pass occupies residues 269–289 (ILSHLVAYANSCLNPIVYALV). Residues 290–363 (SKHFRKGFKK…TSAFMTFNVT (74 aa)) lie on the Cytoplasmic side of the membrane.

It belongs to the G-protein coupled receptor 1 family. As to expression, expressed in neurons in the ventral area of the interpeduncular nucleus (IPN) where expression often overlaps with spx1.

It localises to the membrane. Receptor for the hormone galanin. Receptor for the hormones spexin-1 and spexin-2. This chain is Galanin receptor 2a, found in Danio rerio (Zebrafish).